The primary structure comprises 451 residues: Bifunctional protein GlmU (451 aa).

The tract at residues 1 to 231 (MDSPLAIIVL…ADEVAGINSR (231 aa)) is pyrophosphorylase. Residues 10 to 13 (LAAG), lysine 24, glutamine 74, 79 to 80 (GT), 102 to 104 (YGD), glycine 142, glutamate 156, asparagine 171, and asparagine 229 contribute to the UDP-N-acetyl-alpha-D-glucosamine site. Aspartate 104 provides a ligand contact to Mg(2+). Asparagine 229 is a binding site for Mg(2+). The interval 232 to 252 (GELAEAEGRWQQRRRAAAMAD) is linker. The N-acetyltransferase stretch occupies residues 253-451 (GASLIAPETV…MKKKKAEKKS (199 aa)). 2 residues coordinate UDP-N-acetyl-alpha-D-glucosamine: arginine 318 and lysine 336. The active-site Proton acceptor is the histidine 348. Tyrosine 351 and asparagine 362 together coordinate UDP-N-acetyl-alpha-D-glucosamine. Acetyl-CoA-binding positions include alanine 365, 371–372 (NY), serine 390, alanine 408, and arginine 425.

In the N-terminal section; belongs to the N-acetylglucosamine-1-phosphate uridyltransferase family. It in the C-terminal section; belongs to the transferase hexapeptide repeat family. As to quaternary structure, homotrimer. Requires Mg(2+) as cofactor.

The protein resides in the cytoplasm. The enzyme catalyses alpha-D-glucosamine 1-phosphate + acetyl-CoA = N-acetyl-alpha-D-glucosamine 1-phosphate + CoA + H(+). The catalysed reaction is N-acetyl-alpha-D-glucosamine 1-phosphate + UTP + H(+) = UDP-N-acetyl-alpha-D-glucosamine + diphosphate. It functions in the pathway nucleotide-sugar biosynthesis; UDP-N-acetyl-alpha-D-glucosamine biosynthesis; N-acetyl-alpha-D-glucosamine 1-phosphate from alpha-D-glucosamine 6-phosphate (route II): step 2/2. It participates in nucleotide-sugar biosynthesis; UDP-N-acetyl-alpha-D-glucosamine biosynthesis; UDP-N-acetyl-alpha-D-glucosamine from N-acetyl-alpha-D-glucosamine 1-phosphate: step 1/1. Its pathway is bacterial outer membrane biogenesis; LPS lipid A biosynthesis. Functionally, catalyzes the last two sequential reactions in the de novo biosynthetic pathway for UDP-N-acetylglucosamine (UDP-GlcNAc). The C-terminal domain catalyzes the transfer of acetyl group from acetyl coenzyme A to glucosamine-1-phosphate (GlcN-1-P) to produce N-acetylglucosamine-1-phosphate (GlcNAc-1-P), which is converted into UDP-GlcNAc by the transfer of uridine 5-monophosphate (from uridine 5-triphosphate), a reaction catalyzed by the N-terminal domain. The chain is Bifunctional protein GlmU from Novosphingobium aromaticivorans (strain ATCC 700278 / DSM 12444 / CCUG 56034 / CIP 105152 / NBRC 16084 / F199).